Reading from the N-terminus, the 269-residue chain is MANDKKKLTVNDIKNKKIKGEPIVMMTAYDALFAKIFNDYADIILVGDSLNMSFHLKKETISATMEMMLYHTNAVCAGAKSSFILADMPFGSYSDERSALKNAMKFFKQTEADAVKIEGGMKNVAIIKRLCEEGISVMGHIGLMPQFSKFEGGFKIKGRDETEVKRLMDEAKAIEQAGAFAILLEGTINSVAKQISDSVSVPVIGIGSGADVDGQVLVWSDMLGFFEDFKPKFAKRYLNGAELVRQSVQTYANEVKNRIFPSEEFSYKG.

Positions 48 and 87 each coordinate Mg(2+). Residues 48–49 (DS), Asp-87, and Lys-116 each bind 3-methyl-2-oxobutanoate. Glu-118 provides a ligand contact to Mg(2+). The Proton acceptor role is filled by Glu-185.

The protein belongs to the PanB family. Homodecamer; pentamer of dimers. The cofactor is Mg(2+).

It localises to the cytoplasm. It catalyses the reaction 3-methyl-2-oxobutanoate + (6R)-5,10-methylene-5,6,7,8-tetrahydrofolate + H2O = 2-dehydropantoate + (6S)-5,6,7,8-tetrahydrofolate. It functions in the pathway cofactor biosynthesis; (R)-pantothenate biosynthesis; (R)-pantoate from 3-methyl-2-oxobutanoate: step 1/2. Functionally, catalyzes the reversible reaction in which hydroxymethyl group from 5,10-methylenetetrahydrofolate is transferred onto alpha-ketoisovalerate to form ketopantoate. The chain is 3-methyl-2-oxobutanoate hydroxymethyltransferase from Campylobacter curvus (strain 525.92).